We begin with the raw amino-acid sequence, 702 residues long: Rho GTPase-activating protein 22 (702 aa).

A PH domain is found at 43–151 (PVLKAGWLRK…WVQAIRRVIW (109 aa)). The 195-residue stretch at 161 to 355 (QRLEDTVHHE…VLIRKHGQLF (195 aa)) folds into the Rho-GAP domain. 4 disordered regions span residues 360–433 (LEEP…HTLP), 438–457 (SFRQQGSRSESPKGVNSSLE), 480–511 (RASSGDRLKDTGSAQRLSTYDNVPPSSQFSST), and 555–596 (PSPL…TQAH). Residues S365 and S397 each carry the phosphoserine modification. Composition is skewed to polar residues over residues 407-421 (SRTSPPRLGSQTGPA), 438-456 (SFRQQGSRSESPKGVNSSL), 491-504 (GSAQRLSTYDNVPP), and 581-594 (SGSSEPNDPGSPTQ). Positions 594-691 (QAHVRRCRAL…EEFFSTLGSL (98 aa)) form a coiled coil.

In terms of assembly, interacts with VEZF1. Predominantly present in endothelial cells (at protein level).

The protein resides in the cytoplasm. The protein localises to the nucleus. Rho GTPase-activating protein involved in the signal transduction pathway that regulates endothelial cell capillary tube formation during angiogenesis. Acts as a GTPase activator for the RAC1 by converting it to an inactive GDP-bound state. Inhibits RAC1-dependent lamellipodia formation. May also play a role in transcription regulation via its interaction with VEZF1, by regulating activity of the endothelin-1 (EDN1) promoter. The chain is Rho GTPase-activating protein 22 (Arhgap22) from Mus musculus (Mouse).